The following is a 206-amino-acid chain: Triosephosphate isomerase (206 aa).

Histidine 76 functions as the Electrophile in the catalytic mechanism. Glutamate 146 (proton acceptor) is an active-site residue.

This sequence belongs to the triosephosphate isomerase family. As to quaternary structure, homodimer.

The catalysed reaction is D-glyceraldehyde 3-phosphate = dihydroxyacetone phosphate. Its pathway is carbohydrate biosynthesis; gluconeogenesis. It functions in the pathway carbohydrate degradation; glycolysis; D-glyceraldehyde 3-phosphate from glycerone phosphate: step 1/1. The chain is Triosephosphate isomerase (Tpi) from Aedes togoi (Mosquito).